A 440-amino-acid chain; its full sequence is UPF0761 membrane protein Rru_A2625 (440 aa).

7 consecutive transmembrane segments (helical) span residues 29 to 49 (ILAT…THDI), 61 to 81 (LLAL…FPGF), 117 to 137 (GLTA…LLTI), 157 to 177 (LLVY…SFSL), 201 to 221 (PTLG…MLVP), 224 to 244 (PVPL…SALL), and 264 to 284 (ALAA…VVLM).

This sequence belongs to the UPF0761 family.

It is found in the cell inner membrane. This chain is UPF0761 membrane protein Rru_A2625, found in Rhodospirillum rubrum (strain ATCC 11170 / ATH 1.1.1 / DSM 467 / LMG 4362 / NCIMB 8255 / S1).